The primary structure comprises 193 residues: Imidazoleglycerol-phosphate dehydratase (193 aa).

It belongs to the imidazoleglycerol-phosphate dehydratase family.

Its subcellular location is the cytoplasm. The enzyme catalyses D-erythro-1-(imidazol-4-yl)glycerol 3-phosphate = 3-(imidazol-4-yl)-2-oxopropyl phosphate + H2O. It functions in the pathway amino-acid biosynthesis; L-histidine biosynthesis; L-histidine from 5-phospho-alpha-D-ribose 1-diphosphate: step 6/9. In Saccharolobus islandicus (strain M.14.25 / Kamchatka #1) (Sulfolobus islandicus), this protein is Imidazoleglycerol-phosphate dehydratase.